The chain runs to 319 residues: ATP-dependent 6-phosphofructokinase (319 aa).

Glycine 11 is a binding site for ATP. An ADP-binding site is contributed by 21 to 25 (RAVVR). Residues 72–73 (RC) and 102–105 (GDGS) contribute to the ATP site. A Mg(2+)-binding site is contributed by aspartate 103. 125–127 (TID) contacts substrate. Aspartate 127 functions as the Proton acceptor in the catalytic mechanism. Arginine 154 contacts ADP. Residues arginine 162 and 169 to 171 (MGR) each bind substrate. Residues 185–187 (GAE), arginine 211, and 213–215 (KKH) each bind ADP. Residues glutamate 222, arginine 243, and 249–252 (HVQR) contribute to the substrate site.

It belongs to the phosphofructokinase type A (PFKA) family. ATP-dependent PFK group I subfamily. Prokaryotic clade 'B1' sub-subfamily. Homotetramer. The cofactor is Mg(2+).

Its subcellular location is the cytoplasm. The enzyme catalyses beta-D-fructose 6-phosphate + ATP = beta-D-fructose 1,6-bisphosphate + ADP + H(+). It participates in carbohydrate degradation; glycolysis; D-glyceraldehyde 3-phosphate and glycerone phosphate from D-glucose: step 3/4. Allosterically activated by ADP and other diphosphonucleosides, and allosterically inhibited by phosphoenolpyruvate. Functionally, catalyzes the phosphorylation of D-fructose 6-phosphate to fructose 1,6-bisphosphate by ATP, the first committing step of glycolysis. This Anoxybacillus flavithermus (strain DSM 21510 / WK1) protein is ATP-dependent 6-phosphofructokinase.